The following is an 875-amino-acid chain: Alanine--tRNA ligase (875 aa).

Zn(2+) contacts are provided by His564, His568, Cys666, and His670.

Belongs to the class-II aminoacyl-tRNA synthetase family. As to quaternary structure, homotetramer. It depends on Zn(2+) as a cofactor.

It localises to the cytoplasm. The enzyme catalyses tRNA(Ala) + L-alanine + ATP = L-alanyl-tRNA(Ala) + AMP + diphosphate. Its function is as follows. Catalyzes the attachment of alanine to tRNA(Ala) in a two-step reaction: alanine is first activated by ATP to form Ala-AMP and then transferred to the acceptor end of tRNA(Ala). Also edits incorrectly charged Ser-tRNA(Ala) and Gly-tRNA(Ala) via its editing domain. This chain is Alanine--tRNA ligase, found in Yersinia pseudotuberculosis serotype IB (strain PB1/+).